Here is a 269-residue protein sequence, read N- to C-terminus: Tryptophan synthase alpha chain (269 aa).

Active-site proton acceptor residues include Glu49 and Asp60.

The protein belongs to the TrpA family. Tetramer of two alpha and two beta chains.

The catalysed reaction is (1S,2R)-1-C-(indol-3-yl)glycerol 3-phosphate + L-serine = D-glyceraldehyde 3-phosphate + L-tryptophan + H2O. It functions in the pathway amino-acid biosynthesis; L-tryptophan biosynthesis; L-tryptophan from chorismate: step 5/5. Functionally, the alpha subunit is responsible for the aldol cleavage of indoleglycerol phosphate to indole and glyceraldehyde 3-phosphate. The protein is Tryptophan synthase alpha chain of Pseudomonas fluorescens (strain SBW25).